Consider the following 125-residue polypeptide: Upsalin (125 aa).

The N-terminal stretch at 1–16 (MFPTHVLLIVIACVTA) is a signal peptide.

Post-translationally, weakly glycosylated. In terms of tissue distribution, expressed at highest levels in mantle, followed by adductor muscle. Found in the nacreous shell layer (at protein level).

The protein resides in the secreted. This is Upsalin from Unio pictorum (Painter's mussel).